Here is a 664-residue protein sequence, read N- to C-terminus: MEGVSALLASCPTAGLAGGLGVTACAAAGVVLYRIARRVKPTHTMVNCWFCNHDTLVPYGNRNCWDCPHCEQYNGFQENGDYNKPIPAQYMEHLNHVVSSVPSPRDPAQPQQWVSSQVLLCRRCSHHQTTKIKQLAAFTPREEGRYDEEIEVYRHHLEQMYKLCRPCQAAVEYYIKHQNRQLRALLLSHQFRRREADQAHGQSFSSSAVKAPFQVILLRALAFLACAFLLFTTLYGPSEPFTPGAALPPALPPGGNSSAASDNTTSQAEGWQQLLGLLPEHATEKLHEAWAFGQSHQTSIVAVGLLTCLLAMLLAGRIRLRRIDAFSTCLWALLLGLHLAEHYLQAASPGWLDTLKFSTTSLCCLVGFTAAVATRKSTGPRRFRPRRYFSGDSASLFPSSPSLAVPYPSVTSSPASLFIPTPPGFLPLTKQQLFRSPRRVSPSSLPGRLSRALSLGTIPPLTRTDSGYLFSGSRPPSRVSPAGEVSLSDYFSLLSSSFPASPLPSPAPSVASSVASSSGSLRHRRPLISPARLNLKGQKLLLFSSPGEAPNTPSSSEEFSPPNGSLFIESPQLPQRNHTRDTKHTMEMRSMLARDSARSSHSIKKEDESSQSSTCVVDTTTKGCSEETTPWKARVSPSLVRGLLAVSLAVNALFTSAYLYQSLR.

Met-1 carries the post-translational modification N-acetylmethionine. Topologically, residues 1 to 214 are nuclear; the sequence is MEGVSALLAS…SSSAVKAPFQ (214 aa). Residues 215–235 traverse the membrane as a helical segment; it reads VILLRALAFLACAFLLFTTLY. Residues 236–297 are Perinuclear space-facing; it reads GPSEPFTPGA…EAWAFGQSHQ (62 aa). Positions 245–261 are enriched in low complexity; the sequence is AALPPALPPGGNSSAAS. The tract at residues 245–264 is disordered; it reads AALPPALPPGGNSSAASDNT. Residues 298–318 form a helical membrane-spanning segment; it reads TSIVAVGLLTCLLAMLLAGRI. Over 319 to 322 the chain is Nuclear; sequence RLRR. The chain crosses the membrane as a helical span at residues 323 to 343; it reads IDAFSTCLWALLLGLHLAEHY. Residues 344–356 lie on the Perinuclear space side of the membrane; that stretch reads LQAASPGWLDTLK. The chain crosses the membrane as a helical span at residues 357–374; it reads FSTTSLCCLVGFTAAVAT. The Nuclear segment spans residues 375-642; sequence RKSTGPRRFR…ARVSPSLVRG (268 aa). Ser-441, Ser-444, Ser-450, Ser-454, Ser-466, Ser-477, and Ser-480 each carry phosphoserine. The disordered stretch occupies residues 502-522; sequence PLPSPAPSVASSVASSSGSLR. A compositionally biased stretch (low complexity) spans 508-520; sequence PSVASSVASSSGS. Position 529 is a phosphoserine (Ser-529). Positions 544–629 are disordered; that stretch reads SSPGEAPNTP…TTKGCSEETT (86 aa). Basic and acidic residues-rich tracts occupy residues 578–587 and 595–608; these read HTRDTKHTME and DSARSSHSIKKEDE. Polar residues predominate over residues 610 to 628; sequence SQSSTCVVDTTTKGCSEET. Residues 643–663 traverse the membrane as a helical segment; the sequence is LLAVSLAVNALFTSAYLYQSL. Arg-664 is a topological domain (perinuclear space).

This sequence belongs to the TMEM201 family. As to quaternary structure, isoform 2 interacts with EMD. Isoform 3 interacts with SUN2 and LMNA. May bind to Ran GTPase; has a greater affinity for Ran-GTP over Ran-GDP.

It is found in the nucleus inner membrane. In terms of biological role, critical regulator of angiogenesis and endothelial cell (EC) migration. Promotes the migration of endothelial cells, which is essential for angiogenesis. Interacts with the linker of nucleoskeleton and cytoskeleton (LINC) complex, which plays a vital role in connecting the cell's cytoskeleton to the nuclear envelope. This interaction is essential for maintaining cellular structure and facilitating the movement of endothelial cells, which is critical for proper vascular development. Involved in nuclear movement during fibroblast polarization and migration. May recruit Ran GTPase to the nuclear periphery. Its function is as follows. May define a distinct membrane domain in the vicinity of the mitotic spindle. Involved in the organization of the nuclear envelope implicating EMD, SUN1 and A-type lamina. Functionally, proposed to be involved in actin-dependent nuclear movement; via SUN2 associates with transmembrane actin-associated nuclear (TAN) lines which are bound to F-actin cables and couple the nucleus to retrograde actin flow. This Mus musculus (Mouse) protein is Transmembrane protein 201 (Tmem201).